Reading from the N-terminus, the 124-residue chain is Large ribosomal subunit protein uL18 (124 aa).

It belongs to the universal ribosomal protein uL18 family. In terms of assembly, part of the 50S ribosomal subunit; part of the 5S rRNA/L5/L18/L25 subcomplex. Contacts the 5S and 23S rRNAs.

Its function is as follows. This is one of the proteins that bind and probably mediate the attachment of the 5S RNA into the large ribosomal subunit, where it forms part of the central protuberance. This Orientia tsutsugamushi (strain Boryong) (Rickettsia tsutsugamushi) protein is Large ribosomal subunit protein uL18.